A 258-amino-acid chain; its full sequence is 4-hydroxy-tetrahydrodipicolinate reductase (258 aa).

Residue 10–15 (GCLGRM) participates in NAD(+) binding. An NADP(+)-binding site is contributed by lysine 38. Residues 89–91 (GTT) and 113–116 (AGNM) contribute to the NAD(+) site. Histidine 146 (proton donor/acceptor) is an active-site residue. (S)-2,3,4,5-tetrahydrodipicolinate is bound at residue histidine 147. Lysine 150 (proton donor) is an active-site residue. A (S)-2,3,4,5-tetrahydrodipicolinate-binding site is contributed by 156-157 (GT).

It belongs to the DapB family.

Its subcellular location is the cytoplasm. It catalyses the reaction (S)-2,3,4,5-tetrahydrodipicolinate + NAD(+) + H2O = (2S,4S)-4-hydroxy-2,3,4,5-tetrahydrodipicolinate + NADH + H(+). The catalysed reaction is (S)-2,3,4,5-tetrahydrodipicolinate + NADP(+) + H2O = (2S,4S)-4-hydroxy-2,3,4,5-tetrahydrodipicolinate + NADPH + H(+). It functions in the pathway amino-acid biosynthesis; L-lysine biosynthesis via DAP pathway; (S)-tetrahydrodipicolinate from L-aspartate: step 4/4. Catalyzes the conversion of 4-hydroxy-tetrahydrodipicolinate (HTPA) to tetrahydrodipicolinate. The polypeptide is 4-hydroxy-tetrahydrodipicolinate reductase (Pelagibacter ubique (strain HTCC1062)).